We begin with the raw amino-acid sequence, 212 residues long: ATP-dependent dethiobiotin synthetase BioD (212 aa).

Position 13-18 (13-18 (GIGKTV)) interacts with ATP. Residue Thr17 coordinates Mg(2+). Lys33 is an active-site residue. Ser37 provides a ligand contact to substrate. Position 100 (Glu100) interacts with Mg(2+). ATP contacts are provided by residues 100–103 (EGAG) and 184–186 (PLL).

Belongs to the dethiobiotin synthetase family. Homodimer. The cofactor is Mg(2+).

The protein localises to the cytoplasm. The enzyme catalyses (7R,8S)-7,8-diammoniononanoate + CO2 + ATP = (4R,5S)-dethiobiotin + ADP + phosphate + 3 H(+). It participates in cofactor biosynthesis; biotin biosynthesis; biotin from 7,8-diaminononanoate: step 1/2. Catalyzes a mechanistically unusual reaction, the ATP-dependent insertion of CO2 between the N7 and N8 nitrogen atoms of 7,8-diaminopelargonic acid (DAPA, also called 7,8-diammoniononanoate) to form a ureido ring. The sequence is that of ATP-dependent dethiobiotin synthetase BioD from Brucella melitensis biotype 2 (strain ATCC 23457).